Here is a 353-residue protein sequence, read N- to C-terminus: Nicotinate-nucleotide--dimethylbenzimidazole phosphoribosyltransferase (353 aa).

The active-site Proton acceptor is the E318.

It belongs to the CobT family.

The catalysed reaction is 5,6-dimethylbenzimidazole + nicotinate beta-D-ribonucleotide = alpha-ribazole 5'-phosphate + nicotinate + H(+). It functions in the pathway nucleoside biosynthesis; alpha-ribazole biosynthesis; alpha-ribazole from 5,6-dimethylbenzimidazole: step 1/2. Its function is as follows. Catalyzes the synthesis of alpha-ribazole-5'-phosphate from nicotinate mononucleotide (NAMN) and 5,6-dimethylbenzimidazole (DMB). In Geobacter metallireducens (strain ATCC 53774 / DSM 7210 / GS-15), this protein is Nicotinate-nucleotide--dimethylbenzimidazole phosphoribosyltransferase.